We begin with the raw amino-acid sequence, 534 residues long: O-phosphoserine--tRNA(Cys) ligase (534 aa).

Residues 186–188, 231–233, 273–274, and Asn325 contribute to the substrate site; these read HMT, SAS, and YY.

Belongs to the class-II aminoacyl-tRNA synthetase family. O-phosphoseryl-tRNA(Cys) synthetase subfamily. In terms of assembly, homotetramer. Interacts with SepCysS.

The catalysed reaction is tRNA(Cys) + O-phospho-L-serine + ATP = O-phospho-L-seryl-tRNA(Cys) + AMP + diphosphate. In terms of biological role, catalyzes the attachment of O-phosphoserine (Sep) to tRNA(Cys). The polypeptide is O-phosphoserine--tRNA(Cys) ligase (sepS) (Archaeoglobus fulgidus (strain ATCC 49558 / DSM 4304 / JCM 9628 / NBRC 100126 / VC-16)).